The following is a 210-amino-acid chain: S-norcoclaurine synthase (210 aa).

A signal peptide spans 1 to 19 (MMKMEVVFVFLMLLGTINC). Residue 108-110 (YKE) coordinates dopamine. Lys-122 functions as the Proton donor in the catalytic mechanism. Asp-141 serves as a coordination point for (4-hydroxyphenyl)acetaldehyde.

Belongs to the BetVI family. In terms of assembly, concentration-dependent dimerization, but mainly monomeric at concentrations around 10 uM. Expressed most abundantly in the rhizomes and to a lesser extent in petioles, roots, leaves and flower buds.

It carries out the reaction (4-hydroxyphenyl)acetaldehyde + dopamine = (S)-norcoclaurine + H2O. Functionally, involved in the biosynthesis of the common precursor of all benzylisoquinoline alkaloids such as morphine, sanguinarine, codeine or berberine. Condenses dopamine and 4-hydroxyphenylacetaldehyde. The sequence is that of S-norcoclaurine synthase from Thalictrum flavum subsp. glaucum (Yellow meadow rue).